The sequence spans 150 residues: Actin-related protein 2/3 complex subunit 5-C (150 aa).

The tract at residues 21–45 is disordered; that stretch reads NKFVDEEEAGEGQQGPDEGEVDSAI.

It belongs to the ARPC5 family. As to quaternary structure, component of the Arp2/3 complex composed of actr2/arp2, actr3/arp3, arpc1 (arpc1a or arpc1b), arpc2, arpc3, arpc4 and arpc5.

It localises to the cytoplasm. It is found in the cytoskeleton. The protein localises to the cell projection. Its subcellular location is the nucleus. Its function is as follows. Component of the Arp2/3 complex, a multiprotein complex that mediates actin polymerization upon stimulation by nucleation-promoting factor (NPF). The Arp2/3 complex mediates the formation of branched actin networks in the cytoplasm, providing the force for cell motility. In addition to its role in the cytoplasmic cytoskeleton, the Arp2/3 complex also promotes actin polymerization in the nucleus, thereby regulating gene transcription and repair of damaged DNA. The Arp2/3 complex promotes homologous recombination (HR) repair in response to DNA damage by promoting nuclear actin polymerization, leading to drive motility of double-strand breaks (DSBs). The sequence is that of Actin-related protein 2/3 complex subunit 5-C (arpc5-c) from Xenopus laevis (African clawed frog).